The following is a 616-amino-acid chain: MAU2 chromatid cohesion factor homolog (616 aa).

3 TPR repeats span residues 90-123 (FDTA…SQHN), 445-478 (GSFY…ANAE), and 485-518 (SCSL…ASKI).

The protein belongs to the SCC4/mau-2 family. Component of the cohesin loading complex.

It is found in the nucleus. The protein resides in the nucleoplasm. Functionally, required for association of the cohesin complex with chromatin during interphase. Plays a role in sister chromatid cohesion and normal progression through prometaphase. In Culex quinquefasciatus (Southern house mosquito), this protein is MAU2 chromatid cohesion factor homolog.